The primary structure comprises 504 residues: ATP synthase subunit beta (504 aa).

The tract at residues 1-23 is disordered; that stretch reads MAKAATPKETAAAKKPAAPKKAA. 182–189 is an ATP binding site; it reads GGAGVGKT.

Belongs to the ATPase alpha/beta chains family. As to quaternary structure, F-type ATPases have 2 components, CF(1) - the catalytic core - and CF(0) - the membrane proton channel. CF(1) has five subunits: alpha(3), beta(3), gamma(1), delta(1), epsilon(1). CF(0) has three main subunits: a(1), b(2) and c(9-12). The alpha and beta chains form an alternating ring which encloses part of the gamma chain. CF(1) is attached to CF(0) by a central stalk formed by the gamma and epsilon chains, while a peripheral stalk is formed by the delta and b chains.

Its subcellular location is the cell inner membrane. The catalysed reaction is ATP + H2O + 4 H(+)(in) = ADP + phosphate + 5 H(+)(out). Functionally, produces ATP from ADP in the presence of a proton gradient across the membrane. The catalytic sites are hosted primarily by the beta subunits. The chain is ATP synthase subunit beta from Rhizobium meliloti (strain 1021) (Ensifer meliloti).